The primary structure comprises 254 residues: NH(3)-dependent NAD(+) synthetase (254 aa).

An ATP-binding site is contributed by 29-36 (GLSGGIDS). Asp35 is a binding site for Mg(2+). Arg115 contacts deamido-NAD(+). ATP is bound at residue Thr135. Glu140 lines the Mg(2+) pocket. Deamido-NAD(+) contacts are provided by Lys148 and Asp155. Residues Lys164 and Ser186 each coordinate ATP. 245–246 (HK) provides a ligand contact to deamido-NAD(+).

It belongs to the NAD synthetase family. As to quaternary structure, homodimer.

The catalysed reaction is deamido-NAD(+) + NH4(+) + ATP = AMP + diphosphate + NAD(+) + H(+). The protein operates within cofactor biosynthesis; NAD(+) biosynthesis; NAD(+) from deamido-NAD(+) (ammonia route): step 1/1. Catalyzes the ATP-dependent amidation of deamido-NAD to form NAD. Uses ammonia as a nitrogen source. The polypeptide is NH(3)-dependent NAD(+) synthetase (Methanococcus aeolicus (strain ATCC BAA-1280 / DSM 17508 / OCM 812 / Nankai-3)).